The sequence spans 61 residues: Small ribosomal subunit protein uS14 (61 aa).

Residues C24, C27, C40, and C43 each contribute to the Zn(2+) site.

This sequence belongs to the universal ribosomal protein uS14 family. Zinc-binding uS14 subfamily. Part of the 30S ribosomal subunit. Contacts proteins S3 and S10. Zn(2+) serves as cofactor.

In terms of biological role, binds 16S rRNA, required for the assembly of 30S particles and may also be responsible for determining the conformation of the 16S rRNA at the A site. In Parafrankia sp. (strain EAN1pec), this protein is Small ribosomal subunit protein uS14.